Here is a 487-residue protein sequence, read N- to C-terminus: N-succinylglutamate 5-semialdehyde dehydrogenase (487 aa).

Position 221–226 (221–226 (GSSRTG)) interacts with NAD(+). Active-site residues include glutamate 244 and cysteine 278.

The protein belongs to the aldehyde dehydrogenase family. AstD subfamily.

The catalysed reaction is N-succinyl-L-glutamate 5-semialdehyde + NAD(+) + H2O = N-succinyl-L-glutamate + NADH + 2 H(+). The protein operates within amino-acid degradation; L-arginine degradation via AST pathway; L-glutamate and succinate from L-arginine: step 4/5. In terms of biological role, catalyzes the NAD-dependent reduction of succinylglutamate semialdehyde into succinylglutamate. The protein is N-succinylglutamate 5-semialdehyde dehydrogenase of Ectopseudomonas mendocina (strain ymp) (Pseudomonas mendocina).